The primary structure comprises 167 residues: uncharacterized protein (167 aa).

This is an uncharacterized protein from Mycobacterium tuberculosis (strain CDC 1551 / Oshkosh).